Here is a 481-residue protein sequence, read N- to C-terminus: 7-deoxyloganetin glucosyltransferase (481 aa).

The active-site Proton acceptor is histidine 22. Histidine 22 serves as a coordination point for an anthocyanidin. The active-site Charge relay is aspartate 126. UDP-alpha-D-glucose-binding residues include threonine 148, glutamine 363, histidine 378, tryptophan 381, asparagine 382, serine 383, and glutamate 386. An an anthocyanidin-binding site is contributed by alanine 401. Positions 402 and 403 each coordinate UDP-alpha-D-glucose.

Belongs to the UDP-glycosyltransferase family. Ubiquitous. Very low expression in stems.

It catalyses the reaction 7-deoxyloganetin + UDP-alpha-D-glucose = 7-deoxyloganin + UDP + H(+). In terms of biological role, iridoid glucosyltransferase acting on genipin and 7-deoxyloganetin. No activity with 7-deoxyloganetic acid. Involved in geniposide biosynthesis. This is 7-deoxyloganetin glucosyltransferase (UGT85A24) from Gardenia jasminoides (Cape jasmine).